The following is a 542-amino-acid chain: CTP synthase (542 aa).

The segment at 1–265 is amidoligase domain; sequence MPRYIFITGG…DTEILRCFGI (265 aa). Ser13 is a CTP binding site. Ser13 is a binding site for UTP. 14–19 is an ATP binding site; that stretch reads SLGKGL. Tyr54 contributes to the L-glutamine binding site. Asp71 contacts ATP. The Mg(2+) site is built by Asp71 and Glu139. CTP is bound by residues 146–148, 186–191, and Lys222; these read DIE and KTKPTQ. Residues 186 to 191 and Lys222 contribute to the UTP site; that span reads KTKPTQ. 238–240 is an ATP binding site; the sequence is RDA. Residues 298-541 form the Glutamine amidotransferase type-1 domain; it reads YVGLLDAYKS…IAAALHQSRM (244 aa). L-glutamine is bound at residue Gly353. Residue Cys380 is the Nucleophile; for glutamine hydrolysis of the active site. L-glutamine-binding positions include 381–384, Glu404, and Arg469; that span reads YGMQ. Active-site residues include His514 and Glu516.

The protein belongs to the CTP synthase family. In terms of assembly, homotetramer.

The catalysed reaction is UTP + L-glutamine + ATP + H2O = CTP + L-glutamate + ADP + phosphate + 2 H(+). It carries out the reaction L-glutamine + H2O = L-glutamate + NH4(+). The enzyme catalyses UTP + NH4(+) + ATP = CTP + ADP + phosphate + 2 H(+). The protein operates within pyrimidine metabolism; CTP biosynthesis via de novo pathway; CTP from UDP: step 2/2. With respect to regulation, allosterically activated by GTP, when glutamine is the substrate; GTP has no effect on the reaction when ammonia is the substrate. The allosteric effector GTP functions by stabilizing the protein conformation that binds the tetrahedral intermediate(s) formed during glutamine hydrolysis. Inhibited by the product CTP, via allosteric rather than competitive inhibition. In terms of biological role, catalyzes the ATP-dependent amination of UTP to CTP with either L-glutamine or ammonia as the source of nitrogen. Regulates intracellular CTP levels through interactions with the four ribonucleotide triphosphates. This Maricaulis maris (strain MCS10) (Caulobacter maris) protein is CTP synthase.